The sequence spans 708 residues: Prolyl 3-hydroxylase 2 (708 aa).

A signal peptide spans methionine 1–glycine 24. TPR repeat units follow at residues phenylalanine 44–leucine 77, arginine 148–histidine 181, histidine 210–glutamate 243, and proline 306–aspartate 339. N-linked (GlcNAc...) asparagine glycosylation is found at asparagine 449 and asparagine 549. Positions threonine 557–leucine 671 constitute a Fe2OG dioxygenase domain. The Fe cation site is built by histidine 580, aspartate 582, and histidine 652. Residue arginine 662 is part of the active site. Residues lysine 705–leucine 708 carry the Prevents secretion from ER motif.

Belongs to the leprecan family. Fe cation serves as cofactor. Requires L-ascorbate as cofactor. As to expression, expression localized to the epithelia of bile ducts and to the sacroplasm of heart muscle and skeletal muscle. In the pancreas, localized to a subpopulation of Langerhans islet cells and in the salivary gland, expressed in acinar cells (at protein level). Expressed in adult heart, placenta, lung, liver, skeletal muscle and kidney. Detected in fetal heart, spleen, lung, liver skeletal muscle and kidney.

It localises to the endoplasmic reticulum. It is found in the sarcoplasmic reticulum. The protein localises to the golgi apparatus. The catalysed reaction is L-prolyl-[collagen] + 2-oxoglutarate + O2 = trans-3-hydroxy-L-prolyl-[collagen] + succinate + CO2. Its activity is regulated as follows. Inhibited by pyridine 2,4-dicarboxylate, an analog of 2-oxoglutarate. Functionally, prolyl 3-hydroxylase that catalyzes the post-translational formation of 3-hydroxyproline on collagens. Contributes to proline 3-hydroxylation of collagen COL4A1 and COL1A1 in tendons, the eye sclera and in the eye lens capsule. Has high activity with the type IV collagen COL4A1, and lower activity with COL1A1. Catalyzes hydroxylation of the first Pro in Gly-Pro-Hyp sequences where Hyp is 4-hydroxyproline. Has no activity on substrates that lack 4-hydroxyproline in the third position. The protein is Prolyl 3-hydroxylase 2 of Homo sapiens (Human).